A 917-amino-acid polypeptide reads, in one-letter code: Catenin alpha (917 aa).

Thr643 and Thr645 each carry phosphothreonine. A phosphoserine mark is found at Ser659 and Ser662. Positions Pro878–Ala890 are enriched in basic and acidic residues. Residues Pro878–His905 form a disordered region.

Belongs to the vinculin/alpha-catenin family. In terms of assembly, interacts with arm/armadillo protein. Rapidly phosphorylated by CK2 and more slowly by CK1.

The protein localises to the cytoplasm. The protein resides in the cytoskeleton. It localises to the cell junction. It is found in the adherens junction. Its subcellular location is the cell membrane. Functionally, associates with the cytoplasmic domain of a variety of cadherins. The association of catenins to cadherins produces a complex which is linked to the actin filament network, and which seems to be of primary importance for cadherins cell-adhesion properties. The protein is Catenin alpha of Drosophila melanogaster (Fruit fly).